Consider the following 513-residue polypeptide: NADH-quinone oxidoreductase subunit N (513 aa).

14 consecutive transmembrane segments (helical) span residues 20 to 40 (SVGF…LIVV), 49 to 69 (STLL…FIYQ), 88 to 108 (FAIF…VITM), 117 to 137 (ISSM…MMMM), 144 to 164 (LMIF…AGYF), 178 to 198 (LIYG…IYGV), 219 to 239 (FVML…IGAV), 260 to 280 (LSVA…YVAL), 295 to 315 (WFTL…VVAL), 323 to 343 (LLAY…IVMD), 351 to 371 (LFYL…VVLI), 394 to 414 (GAAL…IGFI), 429 to 451 (IFMW…YMLI), and 474 to 494 (LVAQ…GLFF).

It belongs to the complex I subunit 2 family. As to quaternary structure, NDH-1 is composed of 14 different subunits. Subunits NuoA, H, J, K, L, M, N constitute the membrane sector of the complex.

Its subcellular location is the cell inner membrane. The catalysed reaction is a quinone + NADH + 5 H(+)(in) = a quinol + NAD(+) + 4 H(+)(out). Its function is as follows. NDH-1 shuttles electrons from NADH, via FMN and iron-sulfur (Fe-S) centers, to quinones in the respiratory chain. The immediate electron acceptor for the enzyme in this species is believed to be a menaquinone. Couples the redox reaction to proton translocation (for every two electrons transferred, four hydrogen ions are translocated across the cytoplasmic membrane), and thus conserves the redox energy in a proton gradient. The protein is NADH-quinone oxidoreductase subunit N of Chlorobium chlorochromatii (strain CaD3).